Reading from the N-terminus, the 700-residue chain is Elongation factor G (700 aa).

Residues 8–290 (ERYRNIGISA…AVVEYLPAPT (283 aa)) enclose the tr-type G domain. GTP is bound by residues 17-24 (AHIDAGKT), 88-92 (DTPGH), and 142-145 (NKMD).

It belongs to the TRAFAC class translation factor GTPase superfamily. Classic translation factor GTPase family. EF-G/EF-2 subfamily.

The protein resides in the cytoplasm. Its function is as follows. Catalyzes the GTP-dependent ribosomal translocation step during translation elongation. During this step, the ribosome changes from the pre-translocational (PRE) to the post-translocational (POST) state as the newly formed A-site-bound peptidyl-tRNA and P-site-bound deacylated tRNA move to the P and E sites, respectively. Catalyzes the coordinated movement of the two tRNA molecules, the mRNA and conformational changes in the ribosome. The polypeptide is Elongation factor G (Haemophilus influenzae (strain PittEE)).